Here is an 89-residue protein sequence, read N- to C-terminus: Small ribosomal subunit protein bS20 (89 aa).

The interval 68–89 (PNKGARKSSRLDHFVNEQKSKQ) is disordered. Residues 76–89 (SRLDHFVNEQKSKQ) are compositionally biased toward basic and acidic residues.

Belongs to the bacterial ribosomal protein bS20 family.

Binds directly to 16S ribosomal RNA. The chain is Small ribosomal subunit protein bS20 from Mycoplasmopsis agalactiae (strain NCTC 10123 / CIP 59.7 / PG2) (Mycoplasma agalactiae).